Consider the following 359-residue polypeptide: Protein-L-isoaspartate O-methyltransferase domain-containing protein 2 (359 aa).

A lipid anchor (N-myristoyl glycine) is attached at glycine 2. Residue serine 64 is part of the active site. AdoMet binding motif stretches follow at residues 85–94 (LNLGSGTGYL), 160–164 (YDRVY), and 181–191 (LKVGGILVMPL). The BC-box stretch occupies residues 240–250 (VRSLQDLARLA). A disordered region spans residues 301–328 (SNPSDDTSCEDAEEDRREVAERTLQETK). Residues 314-328 (EDRREVAERTLQETK) show a composition bias toward basic and acidic residues. Positions 343–346 (LPLP) are CUL-box.

This sequence belongs to the methyltransferase superfamily. L-isoaspartyl/D-aspartyl protein methyltransferase family.

The protein localises to the cytoplasm. Functionally, may act as a substrate recognition component of an ECS (Elongin BC-CUL5-SOCS-box protein) E3 ubiquitin ligase complex which mediates the ubiquitination and subsequent proteasomal degradation of target proteins. May bind to the methyltransferase cofactor S-adenosylmethionine (AdoMet) via the N-terminal AdoMet binding motif, but probably does not display methyltransferase activity. The sequence is that of Protein-L-isoaspartate O-methyltransferase domain-containing protein 2 (Pcmtd2) from Mus musculus (Mouse).